The sequence spans 82 residues: Large ribosomal subunit protein uL23 (82 aa).

It belongs to the universal ribosomal protein uL23 family. Part of the 50S ribosomal subunit. Contacts protein L29.

Functionally, binds to 23S rRNA. One of the proteins that surrounds the polypeptide exit tunnel on the outside of the ribosome. In Natronomonas pharaonis (strain ATCC 35678 / DSM 2160 / CIP 103997 / JCM 8858 / NBRC 14720 / NCIMB 2260 / Gabara) (Halobacterium pharaonis), this protein is Large ribosomal subunit protein uL23.